The following is a 367-amino-acid chain: snRNA-activating protein complex subunit 1 (367 aa).

The segment at 1-168 (MGTPPGLQTD…EEFKDPSDRV (168 aa)) is SNAPC3-binding. The interval 164–268 (PSDRVMKLIT…AESLAKIKSK (105 aa)) is SNAPC4-binding. Disordered stretches follow at residues 228 to 254 (KDRK…QETE) and 278 to 367 (KSRR…KRKH). Positions 238–254 (KINDGEEKMEGNSQETE) are enriched in basic and acidic residues. Residues Ser289 and Ser290 each carry the phosphoserine modification. Residues 292–301 (CDSASGQGQV) are compositionally biased toward polar residues.

In terms of assembly, part of the SNAPc complex composed of 5 subunits: SNAPC1, SNAPC2, SNAPC3, SNAPC4 and SNAPC5. SNAPC1 interacts with SNAPC3, SNAPC4 and TBP.

It is found in the nucleus. Part of the SNAPc complex required for the transcription of both RNA polymerase II and III small-nuclear RNA genes. Binds to the proximal sequence element (PSE), a non-TATA-box basal promoter element common to these 2 types of genes. Recruits TBP and BRF2 to the U6 snRNA TATA box. In Macaca fascicularis (Crab-eating macaque), this protein is snRNA-activating protein complex subunit 1 (SNAPC1).